The primary structure comprises 625 residues: MAARLATVACALFLLSSALLRLGCRARFAAEPDSDEDGEETVAFPESPPQKPTVFVVVLARNAAHTLPYFLGCLERLDYPKSRMAIWAATDHNVDNTTEILREWLKSVQRLYHYVEWRPMNEPESYPDEIGPKHWPNSRFSHVMKLRQAALRTAREKWSDYILFIDVDNFLTNPQTLNLMIVENKTIVAPMLESRGLYSNFWCGITPQGFYKRTPDYLQIREWKRMGCFPVPMVHSTFLIDLRKEASDKLAFYPPHQDYTWTFDDIIVFAFSSRQAGIQMYLCNKEHYGYLPIPLKPHQTLQEDVENLIHVQIEAMIDHPPMEPSQFVSVVPKYPDKMGFDEIFMINLKRRKDRRDRMLRTLYEQEIEVKIVEAVDGKALNTSQLKAWNIEMLPGYRDPYSSRPLTRGEIGCFLSHFSVWKEVIDRELEKTLVIEDDVRFEHQFKRKLMKLMEDIDKAQLDWELIYIGRKRMQVKEPEKAVPNVVNLVEADYSYWTLGYAISLEGAQKLVGADPFGKMLPVDEFLPIMYNKHPVAEYKEYYESRDLKAFSAEPLLIYPTHYTGQPGYLSDTETSTIWDNETVATDWDRTHSWKSRKQGHIRSTAKNTEALPPPTSLDTVPSRDEL.

An N-terminal signal peptide occupies residues 1 to 26; the sequence is MAARLATVACALFLLSSALLRLGCRA. Residues asparagine 96, asparagine 184, asparagine 381, and asparagine 579 are each glycosylated (N-linked (GlcNAc...) asparagine). Residues 597-625 form a disordered region; it reads QGHIRSTAKNTEALPPPTSLDTVPSRDEL. The Prevents secretion from ER signature appears at 622–625; sequence RDEL.

The protein belongs to the glycosyltransferase 25 family.

The protein resides in the endoplasmic reticulum lumen. The catalysed reaction is (5R)-5-hydroxy-L-lysyl-[collagen] + UDP-alpha-D-galactose = (5R)-5-O-(beta-D-galactosyl)-5-hydroxy-L-lysyl-[collagen] + UDP + H(+). Beta-galactosyltransferase that transfers beta-galactose to hydroxylysine residues of collagen. This chain is Procollagen galactosyltransferase 2 (Colgalt2), found in Mus musculus (Mouse).